The following is a 305-amino-acid chain: Plant-type L-asparaginase (305 aa).

The active-site Nucleophile is Thr-175. Substrate is bound by residues 202–205 (RVGD) and 224–227 (TGLG).

Belongs to the Ntn-hydrolase family. As to quaternary structure, heterotetramer of two alpha and two beta chains arranged as a dimer of alpha/beta heterodimers. The uncleaved protein forms homodimers. Autocleaved. Generates the alpha and beta subunits. The N-terminal residue of the beta subunit is thought to be responsible for the nucleophile hydrolase activity.

It carries out the reaction L-asparagine + H2O = L-aspartate + NH4(+). Its function is as follows. Catalyzes the hydrolysis of L-asparagine into L-aspartate and ammonia. Does not exhibit glutaminase activity. In Pyrococcus abyssi (strain GE5 / Orsay), this protein is Plant-type L-asparaginase.